Reading from the N-terminus, the 216-residue chain is GTP cyclohydrolase 1 (216 aa).

Zn(2+)-binding residues include cysteine 108, histidine 111, and cysteine 179.

Belongs to the GTP cyclohydrolase I family. Toroid-shaped homodecamer, composed of two pentamers of five dimers.

It carries out the reaction GTP + H2O = 7,8-dihydroneopterin 3'-triphosphate + formate + H(+). The protein operates within cofactor biosynthesis; 7,8-dihydroneopterin triphosphate biosynthesis; 7,8-dihydroneopterin triphosphate from GTP: step 1/1. This chain is GTP cyclohydrolase 1, found in Shewanella oneidensis (strain ATCC 700550 / JCM 31522 / CIP 106686 / LMG 19005 / NCIMB 14063 / MR-1).